We begin with the raw amino-acid sequence, 275 residues long: Fructose-2,6-bisphosphatase TIGAR (275 aa).

The active-site Tele-phosphohistidine intermediate is His-11. Glu-89 (proton donor/acceptor) is an active-site residue.

This sequence belongs to the phosphoglycerate mutase family.

It is found in the cytoplasm. It localises to the nucleus. The protein resides in the mitochondrion. It catalyses the reaction beta-D-fructose 2,6-bisphosphate + H2O = beta-D-fructose 6-phosphate + phosphate. Fructose-bisphosphatase hydrolyzing fructose-2,6-bisphosphate as well as fructose-1,6-bisphosphate. Acts as a negative regulator of glycolysis by lowering intracellular levels of fructose-2,6-bisphosphate in a p53/TP53-dependent manner, resulting in the pentose phosphate pathway (PPP) activation and NADPH production. Contributes to the generation of reduced glutathione to cause a decrease in intracellular reactive oxygen species (ROS) content, correlating with its ability to protect cells from oxidative or metabolic stress-induced cell death. May play a role in mitophagy inhibition. The chain is Fructose-2,6-bisphosphatase TIGAR from Xenopus laevis (African clawed frog).